We begin with the raw amino-acid sequence, 1322 residues long: Phosphoribosylformylglycinamidine synthase (1322 aa).

300–311 (GASTGAGGEIRD) contributes to the ATP binding site. Residues 593-608 (QQTPQRANHTETSPTP) show a composition bias toward polar residues. The tract at residues 593–613 (QQTPQRANHTETSPTPNTLPP) is disordered. Alanine 702 is a binding site for ATP. Mg(2+) is bound by residues aspartate 703, glutamate 742, asparagine 746, and aspartate 915. ATP is bound at residue serine 917. In terms of domain architecture, Glutamine amidotransferase type-1 spans 1073-1322 (VAILREQGIN…LFRNARAWVG (250 aa)). Cysteine 1166 functions as the Nucleophile in the catalytic mechanism. Active-site residues include histidine 1287 and glutamate 1289.

It in the N-terminal section; belongs to the FGAMS family. In terms of assembly, monomer.

The protein resides in the cytoplasm. The enzyme catalyses N(2)-formyl-N(1)-(5-phospho-beta-D-ribosyl)glycinamide + L-glutamine + ATP + H2O = 2-formamido-N(1)-(5-O-phospho-beta-D-ribosyl)acetamidine + L-glutamate + ADP + phosphate + H(+). It participates in purine metabolism; IMP biosynthesis via de novo pathway; 5-amino-1-(5-phospho-D-ribosyl)imidazole from N(2)-formyl-N(1)-(5-phospho-D-ribosyl)glycinamide: step 1/2. Functionally, phosphoribosylformylglycinamidine synthase involved in the purines biosynthetic pathway. Catalyzes the ATP-dependent conversion of formylglycinamide ribonucleotide (FGAR) and glutamine to yield formylglycinamidine ribonucleotide (FGAM) and glutamate. In Xylella fastidiosa (strain 9a5c), this protein is Phosphoribosylformylglycinamidine synthase.